An 81-amino-acid chain; its full sequence is CLAVATA3/ESR (CLE)-related protein 5 (81 aa).

A signal peptide spans 1–26 (MATLILKQTLIILLIIFSLQTLSSQA). Hydroxyproline occurs at positions 73 and 76. Residue P76 is glycosylated (O-linked (Ara...) hydroxyproline).

The protein belongs to the CLV3/ESR signal peptide family. Post-translationally, the O-glycosylation (arabinosylation) of the hydroxyproline Pro-76 enhances binding affinity of the CLE5p peptide for its receptor. As to expression, mostly expressed in roots, and, to a lower extent, in seedlings, stems, apex, flowers and siliques.

The protein localises to the secreted. It localises to the extracellular space. Functionally, extracellular signal peptide that regulates cell fate. The protein is CLAVATA3/ESR (CLE)-related protein 5 of Arabidopsis thaliana (Mouse-ear cress).